Consider the following 495-residue polypeptide: Growth/differentiation factor 5 (495 aa).

A signal peptide spans 1 to 27; it reads MRLPKLLTLLLWHLAWLDLELICTVLG. Residues 28-375 constitute a propeptide that is removed on maturation; that stretch reads APDLGQRTPG…YLFSQRRKRR (348 aa). The segment at 30–162 is disordered; sequence DLGQRTPGAK…KEPFRPPPIT (133 aa). Residues 124 to 137 are compositionally biased toward low complexity; it reads GGKASSKAGSAPSS. Residues 142–156 are compositionally biased toward basic and acidic residues; that stretch reads KTREPGTPREPKEPF. Residue asparagine 183 is glycosylated (N-linked (GlcNAc...) asparagine). Intrachain disulfides connect cysteine 394–cysteine 460, cysteine 423–cysteine 492, and cysteine 427–cysteine 494.

It belongs to the TGF-beta family. As to quaternary structure, homodimer; disulfide-linked. Interacts with serine proteases, HTRA1 and HTRA3. Following LPS binding, may form a complex with CXCR4, HSP90AA1 and HSPA8. Interacts with high affinity with NOG; inhibits chondrogenesis. Interacts with high affinity with BMPR1B and lower affinity with BMPR1A; positively regulates chondrocyte differentiation and induces SMAD-dependent signaling. Interacts with FBN1 (via N-terminal domain) and FBN2. Interacts with TGFBR3.

The protein localises to the secreted. The protein resides in the cell membrane. In terms of biological role, growth factor involved in bone and cartilage formation. During cartilage development regulates differentiation of chondrogenic tissue through two pathways. Firstly, positively regulates differentiation of chondrogenic tissue through its binding of high affinity with BMPR1B and of less affinity with BMPR1A, leading to induction of SMAD1-SMAD5-SMAD8 complex phosphorylation and then SMAD protein signaling transduction. Secondly, negatively regulates chondrogenic differentiation through its interaction with NOG. Required to prevent excessive muscle loss upon denervation. This function requires SMAD4 and is mediated by phosphorylated SMAD1/5/8. Binds bacterial lipopolysaccharide (LPS) and mediates LPS-induced inflammatory response, including TNF secretion by monocytes. The sequence is that of Growth/differentiation factor 5 (Gdf5) from Mus musculus (Mouse).